The sequence spans 219 residues: Ribose-5-phosphate isomerase A (219 aa).

Substrate is bound by residues 28–31 (TGST), 81–84 (DGAD), and 94–97 (KGGG). Glutamate 103 (proton acceptor) is an active-site residue. Position 121 (lysine 121) interacts with substrate.

This sequence belongs to the ribose 5-phosphate isomerase family. In terms of assembly, homodimer.

It catalyses the reaction aldehydo-D-ribose 5-phosphate = D-ribulose 5-phosphate. The protein operates within carbohydrate degradation; pentose phosphate pathway; D-ribose 5-phosphate from D-ribulose 5-phosphate (non-oxidative stage): step 1/1. Functionally, catalyzes the reversible conversion of ribose-5-phosphate to ribulose 5-phosphate. This is Ribose-5-phosphate isomerase A from Pectobacterium atrosepticum (strain SCRI 1043 / ATCC BAA-672) (Erwinia carotovora subsp. atroseptica).